Consider the following 186-residue polypeptide: Large ribosomal subunit protein bL17 (186 aa).

The disordered stretch occupies residues 123–186 (SEADRARRVK…ADEAEGSSED (64 aa)). Over residues 139–177 (EAAAAAPQAAVEPEAVEAAPAPDAPEAAPEAEAAAPQPA) the composition is skewed to low complexity.

The protein belongs to the bacterial ribosomal protein bL17 family. In terms of assembly, part of the 50S ribosomal subunit. Contacts protein L32.

This is Large ribosomal subunit protein bL17 from Mycobacterium avium (strain 104).